The chain runs to 216 residues: Small ribosomal subunit protein eS6 (216 aa).

Belongs to the eukaryotic ribosomal protein eS6 family.

The protein is Small ribosomal subunit protein eS6 of Staphylothermus marinus (strain ATCC 43588 / DSM 3639 / JCM 9404 / F1).